A 1431-amino-acid chain; its full sequence is Collagen alpha-1(XVII) chain (1431 aa).

Residues Met1 to Ser468 are Cytoplasmic-facing. The tract at residues Met1 to Arg569 is nonhelical region (NC16). Disordered regions lie at residues Thr25–Arg155, Lys167–Lys188, Thr304–Ser324, and Ser422–Gly449. A compositionally biased stretch (low complexity) spans Gly60 to Asn74. Polar residues-rich tracts occupy residues Ala75–Ser96, Glu111–Pro120, and Arg170–Leu184. The necessary for interaction with DST and for the recruitment of DST to hemidesmosome stretch occupies residues Arg146–Ser231. The span at Arg430–Gly449 shows a compositional bias: gly residues. A helical; Signal-anchor for type II membrane protein transmembrane segment spans residues Trp469–Gly489. Residues Leu490–Pro1431 lie on the Extracellular side of the membrane. Ser547 is subject to Phosphoserine; by CK2. Disordered stretches follow at residues Glu564–Ser869, Asp884–Gly996, Asp1158–Ser1178, and Phe1208–Val1249. Positions Gly570–Gln1417 are triple-helical region. 3 stretches are compositionally biased toward low complexity: residues Pro657–Asn673, Glu738–Asp751, and Pro778–Pro799. Composition is skewed to pro residues over residues Pro823–Ala844, Leu889–Pro911, Pro937–Pro946, Pro979–Pro989, Pro1162–Pro1174, and Pro1212–Pro1221. The N-linked (GlcNAc...) asparagine glycan is linked to Asn1230. Over residues Ser1232–Val1249 the composition is skewed to polar residues. N-linked (GlcNAc...) asparagine glycosylation occurs at Asn1356. Residues Arg1366–Pro1431 are disordered. Residues Gln1407–Asp1416 are compositionally biased toward basic and acidic residues. Residues Val1418 to Pro1431 are nonhelical region (NC1). A compositionally biased stretch (basic residues) spans Gly1421–Pro1431.

Homotrimers of alpha 1(XVII)chains. Interacts (via cytoplasmic region) with ITGB4 (via cytoplasmic region). Interacts (via cytoplasmic region) with DST (via N-terminus). Interacts (via N-terminus) with PLEC. Interacts (via cytoplasmic region) with DSP. Post-translationally, the intracellular/endo domain is disulfide-linked. In terms of processing, prolines at the third position of the tripeptide repeating unit (G-X-Y) are hydroxylated in some or all of the chains. The ectodomain is shedded from the surface of keratinocytes resulting in a 120-kDa soluble form, also named as 120 kDa linear IgA disease antigen homolog. The shedding is mediated by membrane-bound metalloproteases. This cleavage is inhibited by phosphorylation at Ser-547.

It localises to the cell junction. The protein resides in the hemidesmosome. The protein localises to the membrane. It is found in the secreted. Its subcellular location is the extracellular space. It localises to the extracellular matrix. The protein resides in the basement membrane. Its function is as follows. May play a role in the integrity of hemidesmosome and the attachment of basal keratinocytes to the underlying basement membrane. Functionally, the 120 kDa linear IgA disease antigen homolog is an anchoring filament component involved in dermal-epidermal cohesion. This chain is Collagen alpha-1(XVII) chain (COL17A1), found in Mesocricetus auratus (Golden hamster).